Consider the following 255-residue polypeptide: Pimeloyl-[acyl-carrier protein] methyl ester esterase (255 aa).

Residues Trp18, 78-79 (SL), and 139-143 (FLALD) contribute to the substrate site. The Nucleophile role is filled by Ser78. Catalysis depends on residues Asp203 and His233. His233 is a binding site for substrate.

Belongs to the AB hydrolase superfamily. Carboxylesterase BioH family. As to quaternary structure, monomer.

It localises to the cytoplasm. The enzyme catalyses 6-carboxyhexanoyl-[ACP] methyl ester + H2O = 6-carboxyhexanoyl-[ACP] + methanol + H(+). It functions in the pathway cofactor biosynthesis; biotin biosynthesis. Its function is as follows. The physiological role of BioH is to remove the methyl group introduced by BioC when the pimeloyl moiety is complete. It allows to synthesize pimeloyl-ACP via the fatty acid synthetic pathway through the hydrolysis of the ester bonds of pimeloyl-ACP esters. The chain is Pimeloyl-[acyl-carrier protein] methyl ester esterase from Xylella fastidiosa (strain 9a5c).